Here is a 270-residue protein sequence, read N- to C-terminus: Regulatory protein RecX (270 aa).

The protein belongs to the RecX family.

The protein localises to the cytoplasm. Its function is as follows. Modulates RecA activity. The protein is Regulatory protein RecX of Bacillus cereus (strain G9842).